A 410-amino-acid chain; its full sequence is MSSVIERFLRYAAIDTQSNEESQTTPSTGKQLNLARLLEQELKELGLQDARIQEGYVYGTLPANSTKAIPAIGFIAHMDTSPDFSGTDVKAQLVENYDGQDILLNPEHNLVLSPADFPELLDYIGKTLITTDGTTLLGADDKAGIAEIMTAIAYLTAHPEIEHGTICVAFTPDEEIGRGADQFDVAGFGADFAYTVDGGSIGELEYENFNAAKAIVKVKGRNVHPGNAKNKMINSILLANEYIVKLPPQETPATTEGYEGFYHLNDIRGDVEETTLYYIIRDFAEDSFAKRKETMLNLAEECNKKYGSGHFHVEITDQYKNMKEKIQPVMHIVDKAQKAMETVGVKPLIKPIRGGTDGSRLSFMGLPTPNLFTGGHNYHGRYEFIPTFAMEKSVEVILKIIELYAEEHSN.

His-77 lines the Zn(2+) pocket. Asp-79 is a catalytic residue. Zn(2+) is bound at residue Asp-140. The active-site Proton acceptor is Glu-174. Glu-175, Asp-197, and His-379 together coordinate Zn(2+).

This sequence belongs to the peptidase M20B family. The cofactor is Zn(2+).

The protein localises to the cytoplasm. It catalyses the reaction Release of the N-terminal residue from a tripeptide.. Functionally, cleaves the N-terminal amino acid of tripeptides. The protein is Peptidase T of Desulfitobacterium hafniense (strain DSM 10664 / DCB-2).